Reading from the N-terminus, the 413-residue chain is Histidine--tRNA ligase (413 aa).

Belongs to the class-II aminoacyl-tRNA synthetase family. Homodimer.

The protein localises to the cytoplasm. It carries out the reaction tRNA(His) + L-histidine + ATP = L-histidyl-tRNA(His) + AMP + diphosphate + H(+). This is Histidine--tRNA ligase from Neorickettsia sennetsu (strain ATCC VR-367 / Miyayama) (Ehrlichia sennetsu).